Consider the following 429-residue polypeptide: Trigger factor (429 aa).

The PPIase FKBP-type domain occupies 161 to 246; that stretch reads GDRLSIDFKG…INEIASPKEL (86 aa).

This sequence belongs to the FKBP-type PPIase family. Tig subfamily.

The protein localises to the cytoplasm. The catalysed reaction is [protein]-peptidylproline (omega=180) = [protein]-peptidylproline (omega=0). In terms of biological role, involved in protein export. Acts as a chaperone by maintaining the newly synthesized protein in an open conformation. Functions as a peptidyl-prolyl cis-trans isomerase. This Vesicomyosocius okutanii subsp. Calyptogena okutanii (strain HA) protein is Trigger factor.